Consider the following 248-residue polypeptide: MSSVGSGYDLYVSTYSPDGKLFQVDYANKAVENSGTLVAIKAKDGVVLGVEKLVPSKMLCSGSNRRVHHIDTHVGVAIAGFLADARQLITRARSEAKNYKSTYGQPIPIKVLSQRIASYNHMHTLYGSVRPFGCSIAITGIDQYGPQLFLVEPSGSCVGYFGASLGKGKQAAKNELEKIKFSEMTCREAIKEVSRIIYSVHDEVKDKDFELELGWISTETNNVHQIVPKELHDEAEAYAKQSLEDANM.

This sequence belongs to the peptidase T1A family. As to quaternary structure, the 26S proteasome consists of a 20S proteasome core and two 19S regulatory subunits. The 20S proteasome core is composed of 28 subunits that are arranged in four stacked rings, resulting in a barrel-shaped structure. The two end rings are each formed by seven alpha subunits, and the two central rings are each formed by seven beta subunits. The catalytic chamber with the active sites is on the inside of the barrel.

The protein localises to the cytoplasm. Its subcellular location is the nucleus. Its function is as follows. The proteasome is a multicatalytic proteinase complex which is characterized by its ability to cleave peptides with Arg, Phe, Tyr, Leu, and Glu adjacent to the leaving group at neutral or slightly basic pH. The proteasome has an ATP-dependent proteolytic activity. This is Proteasome subunit alpha type-3 (psmA3) from Dictyostelium discoideum (Social amoeba).